Here is a 264-residue protein sequence, read N- to C-terminus: Phosphonates import ATP-binding protein PhnC (264 aa).

The ABC transporter domain maps to 3–246 (IRLQEAGLRH…MLDALYANEQ (244 aa)). ATP is bound at residue 35–42 (GPSGAGKS).

Belongs to the ABC transporter superfamily. Phosphonates importer (TC 3.A.1.9.1) family. The complex is composed of two ATP-binding proteins (PhnC), two transmembrane proteins (PhnE) and a solute-binding protein (PhnD).

It localises to the cell inner membrane. It carries out the reaction phosphonate(out) + ATP + H2O = phosphonate(in) + ADP + phosphate + H(+). In terms of biological role, part of the ABC transporter complex PhnCDE involved in phosphonates import. Responsible for energy coupling to the transport system. This Pseudomonas entomophila (strain L48) protein is Phosphonates import ATP-binding protein PhnC.